The following is a 442-amino-acid chain: GTPase Der (442 aa).

2 EngA-type G domains span residues 3 to 167 and 177 to 350; these read PTIV…PPDV and PRIA…AAAM. GTP-binding positions include 9-16, 56-60, 119-122, 183-190, 230-234, and 295-298; these read GRPNVGKS, DTAGF, NKSE, DTAGL, and NKWD. Residues 351–435 enclose the KH-like domain; that stretch reads VNLSTPRLTR…PLRIQFRTAH (85 aa).

It belongs to the TRAFAC class TrmE-Era-EngA-EngB-Septin-like GTPase superfamily. EngA (Der) GTPase family. Associates with the 50S ribosomal subunit.

Its function is as follows. GTPase that plays an essential role in the late steps of ribosome biogenesis. This chain is GTPase Der, found in Aromatoleum aromaticum (strain DSM 19018 / LMG 30748 / EbN1) (Azoarcus sp. (strain EbN1)).